A 120-amino-acid chain; its full sequence is NAD(P)H-quinone oxidoreductase subunit 3, chloroplastic (120 aa).

Transmembrane regions (helical) follow at residues isoleucine 9–glycine 29, methionine 64–methionine 84, and valine 88–serine 108.

It belongs to the complex I subunit 3 family. In terms of assembly, NDH is composed of at least 16 different subunits, 5 of which are encoded in the nucleus.

The protein resides in the plastid. Its subcellular location is the chloroplast thylakoid membrane. It carries out the reaction a plastoquinone + NADH + (n+1) H(+)(in) = a plastoquinol + NAD(+) + n H(+)(out). The enzyme catalyses a plastoquinone + NADPH + (n+1) H(+)(in) = a plastoquinol + NADP(+) + n H(+)(out). In terms of biological role, NDH shuttles electrons from NAD(P)H:plastoquinone, via FMN and iron-sulfur (Fe-S) centers, to quinones in the photosynthetic chain and possibly in a chloroplast respiratory chain. The immediate electron acceptor for the enzyme in this species is believed to be plastoquinone. Couples the redox reaction to proton translocation, and thus conserves the redox energy in a proton gradient. The protein is NAD(P)H-quinone oxidoreductase subunit 3, chloroplastic of Buxus microphylla (Littleleaf boxwood).